The following is an 83-amino-acid chain: Parvalbumin beta 3 (83 aa).

EF-hand domains follow at residues 13 to 48 and 52 to 83; these read KSND…FSAG and LTAG…LVKA. Asp-26, Asp-28, Ser-30, Phe-32, Glu-34, Glu-37, Asp-65, Asp-67, Asp-69, Met-71, and Glu-76 together coordinate Ca(2+).

This sequence belongs to the parvalbumin family.

In muscle, parvalbumin is thought to be involved in relaxation after contraction. It binds two calcium ions. This is Parvalbumin beta 3 from Macruronus novaezelandiae (Blue grenadier).